We begin with the raw amino-acid sequence, 427 residues long: Putative dipeptidase MCYG_02918 (427 aa).

The N-terminal stretch at 1 to 29 is a signal peptide; the sequence is MAPERRSRLSDAGILVSLLALTSLVPVQA. Zn(2+) is bound by residues His-55, Asp-57, and Glu-167. A disulfide bridge connects residues Cys-106 and Cys-196. Residue His-194 coordinates substrate. His-238 and His-259 together coordinate Zn(2+). Substrate contacts are provided by Arg-270 and Asp-330. N-linked (GlcNAc...) asparagine glycosylation occurs at Asn-402.

It belongs to the metallo-dependent hydrolases superfamily. Peptidase M19 family. Requires Zn(2+) as cofactor.

It carries out the reaction an L-aminoacyl-L-amino acid + H2O = 2 an L-alpha-amino acid. Functionally, hydrolyzes a wide range of dipeptides. The polypeptide is Putative dipeptidase MCYG_02918 (Arthroderma otae (strain ATCC MYA-4605 / CBS 113480) (Microsporum canis)).